A 245-amino-acid chain; its full sequence is Geranylgeranylglyceryl phosphate synthase (245 aa).

2 residues coordinate Mg(2+): Asp-20 and Ser-50. Sn-glycerol 1-phosphate is bound by residues Tyr-169 to Gly-175, Gly-202 to Gly-203, and Gly-224 to Thr-225.

This sequence belongs to the GGGP/HepGP synthase family. Group II subfamily. The cofactor is Mg(2+).

The protein localises to the cytoplasm. It catalyses the reaction sn-glycerol 1-phosphate + (2E,6E,10E)-geranylgeranyl diphosphate = sn-3-O-(geranylgeranyl)glycerol 1-phosphate + diphosphate. Its pathway is membrane lipid metabolism; glycerophospholipid metabolism. Functionally, prenyltransferase that catalyzes the transfer of the geranylgeranyl moiety of geranylgeranyl diphosphate (GGPP) to the C3 hydroxyl of sn-glycerol-1-phosphate (G1P). This reaction is the first ether-bond-formation step in the biosynthesis of archaeal membrane lipids. This chain is Geranylgeranylglyceryl phosphate synthase, found in Ignicoccus hospitalis (strain KIN4/I / DSM 18386 / JCM 14125).